A 152-amino-acid chain; its full sequence is SsrA-binding protein (152 aa).

The protein belongs to the SmpB family.

The protein resides in the cytoplasm. Required for rescue of stalled ribosomes mediated by trans-translation. Binds to transfer-messenger RNA (tmRNA), required for stable association of tmRNA with ribosomes. tmRNA and SmpB together mimic tRNA shape, replacing the anticodon stem-loop with SmpB. tmRNA is encoded by the ssrA gene; the 2 termini fold to resemble tRNA(Ala) and it encodes a 'tag peptide', a short internal open reading frame. During trans-translation Ala-aminoacylated tmRNA acts like a tRNA, entering the A-site of stalled ribosomes, displacing the stalled mRNA. The ribosome then switches to translate the ORF on the tmRNA; the nascent peptide is terminated with the 'tag peptide' encoded by the tmRNA and targeted for degradation. The ribosome is freed to recommence translation, which seems to be the essential function of trans-translation. This is SsrA-binding protein from Helicobacter pylori (strain J99 / ATCC 700824) (Campylobacter pylori J99).